The primary structure comprises 101 residues: UPF0235 protein Cphamn1_2066 (101 aa).

Belongs to the UPF0235 family.

This is UPF0235 protein Cphamn1_2066 from Chlorobium phaeobacteroides (strain BS1).